We begin with the raw amino-acid sequence, 402 residues long: Type II NADH:quinone oxidoreductase (402 aa).

Residues Gly-12 to Ala-16, Asn-39 to Lys-40, and Val-83 each bind FAD. Glu-172 is an active-site residue. Residues Asp-302, Ala-319–Gln-320, and Lys-379 each bind FAD.

It belongs to the NADH dehydrogenase family. FAD is required as a cofactor.

The protein localises to the cell membrane. The catalysed reaction is a quinone + NADH + H(+) = a quinol + NAD(+). Functionally, alternative, nonproton pumping NADH:quinone oxidoreductase that delivers electrons to the respiratory chain by oxidation of NADH and reduction of quinones, and contributes to the regeneration of NAD(+). The sequence is that of Type II NADH:quinone oxidoreductase from Staphylococcus aureus (strain bovine RF122 / ET3-1).